We begin with the raw amino-acid sequence, 354 residues long: Rhodopsin (354 aa).

Residues 1–36 (MNGTEGPNFYVPFSNKSGVVRSPFEYPQYYLAEPWQ) are Extracellular-facing. N-linked (GlcNAc...) asparagine glycans are attached at residues N2 and N15. The helical transmembrane segment at 37–61 (YSVLAAYMFLLILLGFPVNFLTLYV) threads the bilayer. At 62–73 (TIQHKKLRTPLN) the chain is on the cytoplasmic side. The helical transmembrane segment at 74 to 96 (YILLNLAFANHFMVFGGFPVTMY) threads the bilayer. At 97–110 (SSMHGYFVFGQTGC) the chain is on the extracellular side. Residues C110 and C187 are joined by a disulfide bond. A helical membrane pass occupies residues 111–133 (YIEGFFATMGGEIALWSLVVLAI). A 'Ionic lock' involved in activated form stabilization motif is present at residues 134–136 (ERY). Residues 134-152 (ERYVVVCKPMSNFRFGENH) are Cytoplasmic-facing. The helical transmembrane segment at 153–173 (AIMGVMMTWIMALACAAPPLF) threads the bilayer. Residues 174–202 (GWSRYIPEGMQCSCGVDYYTLKPEVNNES) lie on the Extracellular side of the membrane. Residues 203–224 (FVIYMFLVHFTIPLMIIFFCYG) form a helical membrane-spanning segment. Residues 225 to 252 (RLVCTVKEAAAQQQESATTQKAEKEVTR) lie on the Cytoplasmic side of the membrane. The chain crosses the membrane as a helical span at residues 253–274 (MVIIMVVAFLICWVPYASVAFY). Over 275-286 (IFSNQGTDFGPI) the chain is Extracellular. The chain crosses the membrane as a helical span at residues 287–308 (FMTVPAFFAKSSAIYNPVIYIV). K296 is subject to N6-(retinylidene)lysine. The Cytoplasmic segment spans residues 309 to 354 (LNKQFRNCMITTICCGKNPFGDDETTSAATSKTEASSVSSSQVSPA). 2 S-palmitoyl cysteine lipidation sites follow: C322 and C323. The interval 332–354 (ETTSAATSKTEASSVSSSQVSPA) is disordered. The segment covering 334-354 (TSAATSKTEASSVSSSQVSPA) has biased composition (low complexity).

Belongs to the G-protein coupled receptor 1 family. Opsin subfamily. Post-translationally, contains one covalently linked retinal chromophore. Upon light absorption, the covalently bound 11-cis-retinal is converted to all-trans-retinal. After hydrolysis of the Schiff base and release of the covalently bound all-trans-retinal, active rhodopsin is regenerated by binding of a fresh molecule of 11-cis-retinal.

Its subcellular location is the membrane. It localises to the cell projection. The protein localises to the cilium. It is found in the photoreceptor outer segment. Photoreceptor required for image-forming vision at low light intensity. Required for photoreceptor cell viability after birth. Light-induced isomerization of 11-cis to all-trans retinal triggers a conformational change that activates signaling via G-proteins. Subsequent receptor phosphorylation mediates displacement of the bound G-protein alpha subunit by arrestin and terminates signaling. The sequence is that of Rhodopsin (RHO) from Ambystoma tigrinum (Eastern tiger salamander).